Consider the following 509-residue polypeptide: Probable Xaa-Pro aminopeptidase MAC_04092 (509 aa).

Mn(2+)-binding residues include D273, D284, E437, and E478.

It belongs to the peptidase M24B family. Mn(2+) is required as a cofactor.

The catalysed reaction is Release of any N-terminal amino acid, including proline, that is linked to proline, even from a dipeptide or tripeptide.. Functionally, catalyzes the removal of a penultimate prolyl residue from the N-termini of peptides. This chain is Probable Xaa-Pro aminopeptidase MAC_04092, found in Metarhizium acridum (strain CQMa 102).